Consider the following 183-residue polypeptide: Large ribosomal subunit protein eL18 (183 aa).

Positions H146–V183 are disordered. Basic residues-rich tracts occupy residues S156–G166 and R173–V183.

The protein belongs to the eukaryotic ribosomal protein eL18 family.

This Cicer arietinum (Chickpea) protein is Large ribosomal subunit protein eL18 (RPL18).